Consider the following 844-residue polypeptide: Striatin-interacting proteins 2 (844 aa).

The segment covering 1 to 18 has biased composition (low complexity); it reads MDDPAAPGPAGSPANDNG. The tract at residues 1 to 58 is disordered; that stretch reads MDDPAAPGPAGSPANDNGNGNGNGNGNGNGGKGKPAVPKGRETFRNQRRESEGSVDCP. A compositionally biased stretch (gly residues) spans 19-33; sequence NGNGNGNGNGNGGKG. A compositionally biased stretch (basic and acidic residues) spans 39 to 52; it reads KGRETFRNQRRESE. Phosphoserine is present on residues Ser328, Ser339, and Ser364. The tract at residues 331–355 is disordered; sequence SYTLDLGESQLAPPPSKLRGRRGSR. The disordered stretch occupies residues 370-422; it reads ERDLFKTEEPATEEEEESAADGERTLDGELDLLEQDPLVPPPPSQTPLSTDRV. Residues 379–389 are compositionally biased toward acidic residues; that stretch reads PATEEEEESAA.

Belongs to the STRIP family. Part of the core of STRIPAK complexes composed of PP2A catalytic and scaffolding subunits, the striatins (PP2A regulatory subunits), the striatin-associated proteins MOB4, STRIP1 and STRIP2, PDCD10 and members of the STE20 kinases, such as STK24 and STK26. Interacts with CTTNBP2NL.

It is found in the cytoplasm. Its function is as follows. Plays a role in the regulation of cell morphology and cytoskeletal organization. Required in the control of cell shape. Calmodulin-binding scaffolding protein which is the center of the striatin-interacting phosphatase and kinase (STRIPAK) complexes. STRIPAK complexes have critical roles in protein (de)phosphorylation and are regulators of multiple signaling pathways including Hippo, MAPK, nuclear receptor and cytoskeleton remodeling. Different types of STRIPAK complexes are involved in a variety of biological processes such as cell growth, differentiation, apoptosis, metabolism and immune regulation. The protein is Striatin-interacting proteins 2 (Strip2) of Mus musculus (Mouse).